A 951-amino-acid polypeptide reads, in one-letter code: PE-PGRS family protein PE_PGRS3 (951 aa).

Residues 4 to 94 (VIAAPEVIAA…GAYAAAEAAA (91 aa)) form the PE domain. Basic residues predominate over residues 887 to 919 (CRRQRRADRQRRQRRQRRQSRGHARCRRHRRAA). The segment at 887-951 (CRRQRRADRQ…GISCSPQMMP (65 aa)) is disordered.

Belongs to the mycobacterial PE family. PGRS subfamily.

Its subcellular location is the cell outer membrane. It localises to the secreted. The protein resides in the cell wall. It is found in the cell surface. Functionally, the arginine-rich C-terminal region protrudes from the mycobacterial membrane and mediates M.tuberculosis entry into host epithelial cells. May serve as a bridge between mycobacteria and host cells by interacting with specific host phospholipids and extracting them from host cells, for their direct integration or as a source of phosphate, during phases of TB pathogenesis when M.tuberculosis is short of phosphate supply. The sequence is that of PE-PGRS family protein PE_PGRS3 (PE_PGRS3) from Mycobacterium tuberculosis (strain CDC 1551 / Oshkosh).